The primary structure comprises 463 residues: Soluble pyridine nucleotide transhydrogenase (463 aa).

35–44 serves as a coordination point for FAD; the sequence is EDKPTVGGNC.

It belongs to the class-I pyridine nucleotide-disulfide oxidoreductase family. Requires FAD as cofactor.

The protein resides in the cytoplasm. It carries out the reaction NAD(+) + NADPH = NADH + NADP(+). Its function is as follows. Conversion of NADPH, generated by peripheral catabolic pathways, to NADH, which can enter the respiratory chain for energy generation. This chain is Soluble pyridine nucleotide transhydrogenase, found in Marinobacter nauticus (strain ATCC 700491 / DSM 11845 / VT8) (Marinobacter aquaeolei).